The sequence spans 249 residues: Cytochrome c oxidase subunit 2 (249 aa).

An N-terminal signal peptide occupies residues 1–13; sequence MLNLFQIMNMINN. Residues 14–40 lie on the Mitochondrial intermembrane side of the membrane; that stretch reads DVPTPYGFYFQDSATPNQEGILELHDN. The chain crosses the membrane as a helical span at residues 41-62; it reads IMFYLVVILGLVSWMLFTIVRT. At 63–80 the chain is on the mitochondrial matrix side; that stretch reads YSRNPMAYKYIKHGQTIE. Residues 81 to 105 traverse the membrane as a helical segment; sequence IIWKIFPAVILLTIAFPSFILLYLC. Over 106-249 the chain is Mitochondrial intermembrane; sequence DEVISPAMTI…PKFLEWLNEQ (144 aa). Residues His184, Cys219, Glu221, Cys223, His227, and Met230 each contribute to the Cu cation site. Residue Glu221 participates in Mg(2+) binding.

It belongs to the cytochrome c oxidase subunit 2 family. In terms of assembly, component of the cytochrome c oxidase (complex IV, CIV), a multisubunit enzyme composed of a catalytic core of 3 subunits and several supernumerary subunits. The complex exists as a monomer or a dimer and forms supercomplexes (SCs) in the inner mitochondrial membrane with ubiquinol-cytochrome c oxidoreductase (cytochrome b-c1 complex, complex III, CIII). Cu cation serves as cofactor. The signal sequence of COX2 is processed by IMP1.

The protein localises to the mitochondrion inner membrane. The enzyme catalyses 4 Fe(II)-[cytochrome c] + O2 + 8 H(+)(in) = 4 Fe(III)-[cytochrome c] + 2 H2O + 4 H(+)(out). Functionally, component of the cytochrome c oxidase, the last enzyme in the mitochondrial electron transport chain which drives oxidative phosphorylation. The respiratory chain contains 3 multisubunit complexes succinate dehydrogenase (complex II, CII), ubiquinol-cytochrome c oxidoreductase (cytochrome b-c1 complex, complex III, CIII) and cytochrome c oxidase (complex IV, CIV), that cooperate to transfer electrons derived from NADH and succinate to molecular oxygen, creating an electrochemical gradient over the inner membrane that drives transmembrane transport and the ATP synthase. Cytochrome c oxidase is the component of the respiratory chain that catalyzes the reduction of oxygen to water. Electrons originating from reduced cytochrome c in the intermembrane space (IMS) are transferred via the dinuclear copper A center (CU(A)) of subunit 2 and heme A of subunit 1 to the active site in subunit 1, a binuclear center (BNC) formed by heme A3 and copper B (CU(B)). The BNC reduces molecular oxygen to 2 water molecules using 4 electrons from cytochrome c in the IMS and 4 protons from the mitochondrial matrix. The protein is Cytochrome c oxidase subunit 2 (COX2) of Maudiozyma exigua (Yeast).